Consider the following 80-residue polypeptide: Defensin-like protein 207 (80 aa).

The signal sequence occupies residues M1–A29. 3 disulfides stabilise this stretch: C38–C64, C50–C75, and C54–C77.

The protein belongs to the DEFL family.

It is found in the secreted. This Arabidopsis thaliana (Mouse-ear cress) protein is Defensin-like protein 207.